Here is a 1351-residue protein sequence, read N- to C-terminus: D-lysergyl-peptide-synthetase subunit 2 (1351 aa).

An adenylation (A) domain region spans residues Arg-285–Arg-684. Positions Ala-828–Lys-904 constitute a Carrier domain. The residue at position 865 (Ser-865) is an O-(pantetheine 4'-phosphoryl)serine. The tract at residues Glu-941–Gln-1340 is condensation (C) domain.

This sequence belongs to the NRP synthetase family.

It participates in alkaloid biosynthesis; ergot alkaloid biosynthesis. Functionally, D-lysergyl-peptide-synthetase subunit 2; part of the gene cluster that mediates the biosynthesis of fungal ergot alkaloid ergovaline, the predominant ergopeptine product in E.festucae var. lolii. DmaW catalyzes the first step of ergot alkaloid biosynthesis by condensing dimethylallyl diphosphate (DMAP) and tryptophan to form 4-dimethylallyl-L-tryptophan. The second step is catalyzed by the methyltransferase easF that methylates 4-dimethylallyl-L-tryptophan in the presence of S-adenosyl-L-methionine, resulting in the formation of 4-dimethylallyl-L-abrine. The catalase easC and the FAD-dependent oxidoreductase easE then transform 4-dimethylallyl-L-abrine to chanoclavine-I which is further oxidized by easD in the presence of NAD(+), resulting in the formation of chanoclavine-I aldehyde. Agroclavine dehydrogenase easG then mediates the conversion of chanoclavine-I aldehyde to agroclavine via a non-enzymatic adduct reaction: the substrate is an iminium intermediate that is formed spontaneously from chanoclavine-I aldehyde in the presence of glutathione. The presence of easA is not required to complete this reaction. Further conversion of agroclavine to paspalic acid is a two-step process involving oxidation of agroclavine to elymoclavine and of elymoclavine to paspalic acid, the second step being performed by the elymoclavine oxidase cloA. Paspalic acid is then further converted to D-lysergic acid. Ergovaline is assembled from D-lysergic acid and three different amino acids by the D-lysergyl-peptide-synthetase composed of a monomudular (lpsB) and a trimodular (lpsA) nonribosomal peptide synthetase subunit. This chain is D-lysergyl-peptide-synthetase subunit 2, found in Epichloe festucae var. lolii (Neotyphodium lolii).